The sequence spans 207 residues: Uracil phosphoribosyltransferase (207 aa).

Residues arginine 77, arginine 102, and 129 to 137 each bind 5-phospho-alpha-D-ribose 1-diphosphate; that span reads DPMLATGGS. Uracil-binding positions include isoleucine 192 and 197-199; that span reads GDA. Aspartate 198 contacts 5-phospho-alpha-D-ribose 1-diphosphate.

The protein belongs to the UPRTase family. The cofactor is Mg(2+).

The catalysed reaction is UMP + diphosphate = 5-phospho-alpha-D-ribose 1-diphosphate + uracil. It participates in pyrimidine metabolism; UMP biosynthesis via salvage pathway; UMP from uracil: step 1/1. Allosterically activated by GTP. Its function is as follows. Catalyzes the conversion of uracil and 5-phospho-alpha-D-ribose 1-diphosphate (PRPP) to UMP and diphosphate. The chain is Uracil phosphoribosyltransferase from Mesoplasma florum (strain ATCC 33453 / NBRC 100688 / NCTC 11704 / L1) (Acholeplasma florum).